We begin with the raw amino-acid sequence, 559 residues long: DNA ligase (559 aa).

ATP is bound at residue E247. The active-site N6-AMP-lysine intermediate is K249. ATP is bound by residues R254, R269, E299, F339, R414, and K420.

Belongs to the ATP-dependent DNA ligase family. Requires Mg(2+) as cofactor.

It carries out the reaction ATP + (deoxyribonucleotide)n-3'-hydroxyl + 5'-phospho-(deoxyribonucleotide)m = (deoxyribonucleotide)n+m + AMP + diphosphate.. Its function is as follows. DNA ligase that seals nicks in double-stranded DNA during DNA replication, DNA recombination and DNA repair. The chain is DNA ligase from Pyrococcus abyssi.